The sequence spans 350 residues: Phenylalanine--tRNA ligase alpha subunit (350 aa).

Glutamate 257 lines the Mg(2+) pocket.

This sequence belongs to the class-II aminoacyl-tRNA synthetase family. Phe-tRNA synthetase alpha subunit type 1 subfamily. Tetramer of two alpha and two beta subunits. It depends on Mg(2+) as a cofactor.

Its subcellular location is the cytoplasm. The catalysed reaction is tRNA(Phe) + L-phenylalanine + ATP = L-phenylalanyl-tRNA(Phe) + AMP + diphosphate + H(+). The sequence is that of Phenylalanine--tRNA ligase alpha subunit from Listeria monocytogenes serotype 4b (strain CLIP80459).